We begin with the raw amino-acid sequence, 150 residues long: Macrodomain Ter protein (150 aa).

Belongs to the MatP family. As to quaternary structure, homodimer.

It is found in the cytoplasm. In terms of biological role, required for spatial organization of the terminus region of the chromosome (Ter macrodomain) during the cell cycle. Prevents early segregation of duplicated Ter macrodomains during cell division. Binds specifically to matS, which is a 13 bp signature motif repeated within the Ter macrodomain. In Escherichia coli (strain SMS-3-5 / SECEC), this protein is Macrodomain Ter protein.